We begin with the raw amino-acid sequence, 101 residues long: Small ribosomal subunit protein uS14 (101 aa).

The protein belongs to the universal ribosomal protein uS14 family. In terms of assembly, part of the 30S ribosomal subunit. Contacts proteins S3 and S10.

Functionally, binds 16S rRNA, required for the assembly of 30S particles and may also be responsible for determining the conformation of the 16S rRNA at the A site. This Leifsonia xyli subsp. xyli (strain CTCB07) protein is Small ribosomal subunit protein uS14.